A 186-amino-acid polypeptide reads, in one-letter code: UPF0340 protein M6_Spy1622 (186 aa).

The protein belongs to the UPF0340 family.

The polypeptide is UPF0340 protein M6_Spy1622 (Streptococcus pyogenes serotype M6 (strain ATCC BAA-946 / MGAS10394)).